A 249-amino-acid polypeptide reads, in one-letter code: Probable phosphatase VVA0289 (249 aa).

Zn(2+) contacts are provided by His8, His10, His16, His41, Glu74, His102, His132, Asp194, and His196.

The protein belongs to the PHP family. Zn(2+) serves as cofactor.

The sequence is that of Probable phosphatase VVA0289 from Vibrio vulnificus (strain YJ016).